The primary structure comprises 287 residues: Phosphoribosylaminoimidazole-succinocarboxamide synthase (287 aa).

It belongs to the SAICAR synthetase family.

The catalysed reaction is 5-amino-1-(5-phospho-D-ribosyl)imidazole-4-carboxylate + L-aspartate + ATP = (2S)-2-[5-amino-1-(5-phospho-beta-D-ribosyl)imidazole-4-carboxamido]succinate + ADP + phosphate + 2 H(+). It participates in purine metabolism; IMP biosynthesis via de novo pathway; 5-amino-1-(5-phospho-D-ribosyl)imidazole-4-carboxamide from 5-amino-1-(5-phospho-D-ribosyl)imidazole-4-carboxylate: step 1/2. The chain is Phosphoribosylaminoimidazole-succinocarboxamide synthase from Neisseria meningitidis serogroup B (strain ATCC BAA-335 / MC58).